The following is a 316-amino-acid chain: Beta-ketoacyl-[acyl-carrier-protein] synthase III (316 aa).

Catalysis depends on residues cysteine 112 and histidine 243. The ACP-binding stretch occupies residues 244–248 (QANLR). Asparagine 273 is a catalytic residue.

It belongs to the thiolase-like superfamily. FabH family. In terms of assembly, homodimer.

It localises to the cytoplasm. The catalysed reaction is malonyl-[ACP] + acetyl-CoA + H(+) = 3-oxobutanoyl-[ACP] + CO2 + CoA. The protein operates within lipid metabolism; fatty acid biosynthesis. Catalyzes the condensation reaction of fatty acid synthesis by the addition to an acyl acceptor of two carbons from malonyl-ACP. Catalyzes the first condensation reaction which initiates fatty acid synthesis and may therefore play a role in governing the total rate of fatty acid production. Possesses both acetoacetyl-ACP synthase and acetyl transacylase activities. Its substrate specificity determines the biosynthesis of branched-chain and/or straight-chain of fatty acids. This chain is Beta-ketoacyl-[acyl-carrier-protein] synthase III, found in Haemophilus influenzae (strain 86-028NP).